Reading from the N-terminus, the 283-residue chain is Protein ATAF2 (283 aa).

The region spanning 7–159 is the NAC domain; the sequence is LPAGFRFHPT…DWVLCRIYNK (153 aa). Residues 103-165 mediate DNA binding; sequence LGIKKALVFY…IYNKKGTMEK (63 aa). Residues 171–211 are disordered; that stretch reads EKPRTTTMAEQSSSPFDTSDSTYPTLQEDDSSSSGGHGHVV. Polar residues predominate over residues 175 to 195; the sequence is TTTMAEQSSSPFDTSDSTYPT.

Homodimer. Interacts with AHK2. Interacts with AHL12 and AHL27. Interacts with the helicase domain of the tobamovirus (TMV) replicase. In terms of tissue distribution, expressed in roots, cotyledons, rosette leaves, cauline leaves and mature flowers. Expressed at low levels in stems and flower buds.

It is found in the nucleus. Involved in disease resistance response. May function as repressor of pathogenesis-related proteins. May function in the regulation of host basal defense responses against viral infection. Transcriptional activator involved in responses to wounding and infection with tobamovirus (TMV). Binds to the DNA sequences 5'-AAAATATCT-3' and 5'AGATTTTT-3' of CYP734A1/BAS1 and CYP72C1/SOB7 promoters, respectively. Acts as a suppressor of the brassinosteroid (BR)-inactivating enzymes CYP734A1/BAS1 and CYP72C1/SOB7, and prevents their expression in almost all tissues. Plays a central role in integrating BR homeostasis and seedling development. Regulates the spatial regulation of BR homeostasis and participates in the regulation of hypocotyl elongation and root growth by suppressing BR catabolism. Mediates connection between BR catabolism and photomorphogenesis. Binds to, and transactivates the promoter of the auxin biosynthetic gene NIT2. Stress-responsive NAC transcription factor involved in ABA-inducible leaf senescence signaling. Required for normal seed development and morphology. The sequence is that of Protein ATAF2 (NAC081) from Arabidopsis thaliana (Mouse-ear cress).